A 579-amino-acid chain; its full sequence is F-box protein At5g39450 (579 aa).

In terms of domain architecture, F-box spans 16 to 62; that stretch reads TCLLLSLPEDVIAVIARFVSPRDICNLSLCCKSLCDVVDSERIWLVQ.

The chain is F-box protein At5g39450 from Arabidopsis thaliana (Mouse-ear cress).